Here is a 426-residue protein sequence, read N- to C-terminus: Cdc25-like protein phosphatase twine (426 aa).

A disordered region spans residues 1–27 (MASKRLMLDVEEEDDESGACGQENFDP). The Rhodanese domain occupies 265–371 (SQGGYEIIDC…FFGLYSQLCQ (107 aa)). Residue Cys318 is part of the active site.

The protein belongs to the MPI phosphatase family. Expressed in developing male and female germ cells.

It carries out the reaction O-phospho-L-tyrosyl-[protein] + H2O = L-tyrosyl-[protein] + phosphate. In terms of biological role, required during meiosis. Regulates the transition from the extended G2 phase to the onset of the first meiotic division. The polypeptide is Cdc25-like protein phosphatase twine (twe) (Drosophila melanogaster (Fruit fly)).